The sequence spans 368 residues: DNA replication and repair protein RecF (368 aa).

30-37 contacts ATP; that stretch reads GRNGSGKT.

It belongs to the RecF family.

Its subcellular location is the cytoplasm. In terms of biological role, the RecF protein is involved in DNA metabolism; it is required for DNA replication and normal SOS inducibility. RecF binds preferentially to single-stranded, linear DNA. It also seems to bind ATP. This Chlorobaculum tepidum (strain ATCC 49652 / DSM 12025 / NBRC 103806 / TLS) (Chlorobium tepidum) protein is DNA replication and repair protein RecF.